Reading from the N-terminus, the 686-residue chain is Phosphomethylpyrimidine synthase (686 aa).

Residues Asn235, Met264, Tyr293, His329, 349-351 (SRG), 390-393 (DGMR), and Glu429 contribute to the substrate site. Position 433 (His433) interacts with Zn(2+). Tyr456 lines the substrate pocket. His497 contacts Zn(2+). The [4Fe-4S] cluster site is built by Cys577, Cys580, and Cys585. Positions 659 to 686 (IDSSGINDNKNDQQDASVVRVPSLEIEG) are disordered.

Belongs to the ThiC family. Homodimer. Requires [4Fe-4S] cluster as cofactor.

The enzyme catalyses 5-amino-1-(5-phospho-beta-D-ribosyl)imidazole + S-adenosyl-L-methionine = 4-amino-2-methyl-5-(phosphooxymethyl)pyrimidine + CO + 5'-deoxyadenosine + formate + L-methionine + 3 H(+). Its pathway is cofactor biosynthesis; thiamine diphosphate biosynthesis. Functionally, catalyzes the synthesis of the hydroxymethylpyrimidine phosphate (HMP-P) moiety of thiamine from aminoimidazole ribotide (AIR) in a radical S-adenosyl-L-methionine (SAM)-dependent reaction. The chain is Phosphomethylpyrimidine synthase from Shewanella denitrificans (strain OS217 / ATCC BAA-1090 / DSM 15013).